The following is a 419-amino-acid chain: Metacaspase-1 (419 aa).

Residues 1–109 (MSGYPGYNNG…PPQGMHAFGQ (109 aa)) form a disordered region. Composition is skewed to pro residues over residues 18 to 37 (QYPPQPYYPPQPAYGAPPPQ) and 45 to 61 (QPPPPQQPYGYSQPPPQ). A compositionally biased stretch (polar residues) spans 83–95 (SVNSNAYTNGNQN). Residues H210 and C266 contribute to the active site.

Belongs to the peptidase C14B family.

Its function is as follows. Involved in cell death (apoptosis). This is Metacaspase-1 (casA) from Botryotinia fuckeliana (strain B05.10) (Noble rot fungus).